A 367-amino-acid chain; its full sequence is Polyenoic acids biosynthesis gene cluster protein Ba17b (367 aa).

Helical transmembrane passes span leucine 16–tyrosine 36, tryptophan 50–valine 70, and leucine 90–leucine 110. The N-linked (GlcNAc...) asparagine glycan is linked to asparagine 133. A run of 3 helical transmembrane segments spans residues leucine 137–phenylalanine 157, phenylalanine 183–leucine 203, and leucine 211–serine 231. Residue asparagine 245 is glycosylated (N-linked (GlcNAc...) asparagine). A helical membrane pass occupies residues leucine 259 to tyrosine 279.

This sequence belongs to the SAT4 family.

It localises to the membrane. The protein operates within secondary metabolite biosynthesis. Functionally, part of the gene cluster that mediates the biosynthesis of (2Z,4E,6E,10E)-9-hydroxydodeca-2,4,6,10-tetraenoic acid (BAA), (2E,4E,6E,10E)-9-hydroxydodeca-2,4,6,10-tetraenoic acid (BAB), and (2Z,4E,6E)-octa-2,4,6-trienedioic acid (PBA). The highly reducing polyketide synthase Ba17a is sufficent to produce PBA and BAA. The still to be characterized protein Ba17b leads to an increased production of BAA as well as to the production of the new compound BAB. BAA does not possess insecticidal activity against G.mellonella larvae, however, both BAA and BAB increase the growth of Candida albicans and BAA can mitigate the fungicidal effects of fluconazole over C.albicans, suggesting that generalist pathogens such as M.anisopliae, can potentially manipulate the yeast microbiota found in arthropods (and anywhere else) by the activity of compounds as BAA and BAB. This is Polyenoic acids biosynthesis gene cluster protein Ba17b from Metarhizium anisopliae (Entomophthora anisopliae).